Reading from the N-terminus, the 944-residue chain is Neutral alpha-glucosidase AB (944 aa).

Positions 1–32 (MAAIAAVAARRRRSWLSLVLAYLGVCLGITLA) are cleaved as a signal peptide. A disulfide bridge links Cys41 with Cys47. A Phosphoserine modification is found at Ser52. An N-linked (GlcNAc...) asparagine glycan is attached at Asn97. Residues 180–238 (HQRAPRVPQESKDPAEGNGAQPEATPGDGDKPEETQEKAEKDEPGAWEETFKTHSDSKP) are disordered. The span at 207-236 (DGDKPEETQEKAEKDEPGAWEETFKTHSDS) shows a compositional bias: basic and acidic residues. The substrate site is built by Asp283 and Asp429. The active-site Nucleophile is Asp542. Residue Arg602 coordinates substrate. Asp618 functions as the Proton donor in the catalytic mechanism. A disulfide bridge links Cys633 with Cys644. His676 serves as a coordination point for substrate.

It belongs to the glycosyl hydrolase 31 family. As to quaternary structure, heterodimer of a catalytic alpha subunit (GANAB) and a beta subunit (PRKCSH). Binds glycosylated PTPRC.

It is found in the endoplasmic reticulum. The protein localises to the golgi apparatus. Its subcellular location is the melanosome. The enzyme catalyses N(4)-(alpha-D-Glc-(1-&gt;3)-alpha-D-Man-(1-&gt;2)-alpha-D-Man-(1-&gt;2)-alpha-D-Man-(1-&gt;3)-[alpha-D-Man-(1-&gt;2)-alpha-D-Man-(1-&gt;3)-[alpha-D-Man-(1-&gt;2)-alpha-D-Man-(1-&gt;6)]-alpha-D-Man-(1-&gt;6)]-beta-D-Man-(1-&gt;4)-beta-D-GlcNAc-(1-&gt;4)-beta-D-GlcNAc)-L-asparaginyl-[protein] + H2O = N(4)-(alpha-D-Man-(1-&gt;2)-alpha-D-Man-(1-&gt;2)-alpha-D-Man-(1-&gt;3)-[alpha-D-Man-(1-&gt;2)-alpha-D-Man-(1-&gt;3)-[alpha-D-Man-(1-&gt;2)-alpha-D-Man-(1-&gt;6)]-alpha-D-Man-(1-&gt;6)]-beta-D-Man-(1-&gt;4)-beta-D-GlcNAc-(1-&gt;4)-beta-D-GlcNAc)-L-asparaginyl-[protein] (N-glucan mannose isomer 9A1,2,3B1,2,3) + beta-D-glucose. It catalyses the reaction N(4)-(alpha-D-Glc-(1-&gt;3)-alpha-D-Glc-(1-&gt;3)-alpha-D-Man-(1-&gt;2)-alpha-D-Man-(1-&gt;2)-alpha-D-Man-(1-&gt;3)-[alpha-D-Man-(1-&gt;2)-alpha-D-Man-(1-&gt;3)-[alpha-D-Man-(1-&gt;2)-alpha-D-Man-(1-&gt;6)]-alpha-D-Man-(1-&gt;6)]-beta-D-Man-(1-&gt;4)-beta-D-GlcNAc-(1-&gt;4)-beta-D-GlcNAc)-L-asparaginyl-[protein] + H2O = N(4)-(alpha-D-Glc-(1-&gt;3)-alpha-D-Man-(1-&gt;2)-alpha-D-Man-(1-&gt;2)-alpha-D-Man-(1-&gt;3)-[alpha-D-Man-(1-&gt;2)-alpha-D-Man-(1-&gt;3)-[alpha-D-Man-(1-&gt;2)-alpha-D-Man-(1-&gt;6)]-alpha-D-Man-(1-&gt;6)]-beta-D-Man-(1-&gt;4)-beta-D-GlcNAc-(1-&gt;4)-beta-D-GlcNAc)-L-asparaginyl-[protein] + beta-D-glucose. Its pathway is glycan metabolism; N-glycan metabolism. In terms of biological role, catalytic subunit of glucosidase II that cleaves sequentially the 2 innermost alpha-1,3-linked glucose residues from the Glc(2)Man(9)GlcNAc(2) oligosaccharide precursor of immature glycoproteins. Required for PKD1/Polycystin-1 and PKD2/Polycystin-2 maturation and localization to the cell surface and cilia. The protein is Neutral alpha-glucosidase AB of Mus musculus (Mouse).